The sequence spans 379 residues: Probable pectin lyase A (379 aa).

Residues 1-19 (MKFALLSGVAAGLLPVVSA) form the signal peptide. Disulfide bonds link cysteine 82/cysteine 101 and cysteine 91/cysteine 225. Arginine 255 is a catalytic residue. A disulfide bond links cysteine 322 and cysteine 330.

This sequence belongs to the polysaccharide lyase 1 family.

The protein resides in the secreted. The enzyme catalyses Eliminative cleavage of (1-&gt;4)-alpha-D-galacturonan methyl ester to give oligosaccharides with 4-deoxy-6-O-methyl-alpha-D-galact-4-enuronosyl groups at their non-reducing ends.. Its function is as follows. Pectinolytic enzymes consist of four classes of enzymes: pectin lyase, polygalacturonase, pectin methylesterase and rhamnogalacturonase. Among pectinolytic enzymes, pectin lyase is the most important in depolymerization of pectin, since it cleaves internal glycosidic bonds of highly methylated pectins. This chain is Probable pectin lyase A (pelA), found in Aspergillus oryzae (strain ATCC 42149 / RIB 40) (Yellow koji mold).